The sequence spans 500 residues: Probable malate:quinone oxidoreductase (500 aa).

Belongs to the MQO family. It depends on FAD as a cofactor.

It carries out the reaction (S)-malate + a quinone = a quinol + oxaloacetate. The protein operates within carbohydrate metabolism; tricarboxylic acid cycle; oxaloacetate from (S)-malate (quinone route): step 1/1. The protein is Probable malate:quinone oxidoreductase of Corynebacterium aurimucosum (strain ATCC 700975 / DSM 44827 / CIP 107346 / CN-1) (Corynebacterium nigricans).